Here is a 289-residue protein sequence, read N- to C-terminus: Bifunctional protein FolD (289 aa).

NADP(+)-binding positions include 166–168 (GVS) and Ile232.

This sequence belongs to the tetrahydrofolate dehydrogenase/cyclohydrolase family. In terms of assembly, homodimer.

The catalysed reaction is (6R)-5,10-methylene-5,6,7,8-tetrahydrofolate + NADP(+) = (6R)-5,10-methenyltetrahydrofolate + NADPH. It carries out the reaction (6R)-5,10-methenyltetrahydrofolate + H2O = (6R)-10-formyltetrahydrofolate + H(+). Its pathway is one-carbon metabolism; tetrahydrofolate interconversion. Functionally, catalyzes the oxidation of 5,10-methylenetetrahydrofolate to 5,10-methenyltetrahydrofolate and then the hydrolysis of 5,10-methenyltetrahydrofolate to 10-formyltetrahydrofolate. The sequence is that of Bifunctional protein FolD from Methylobacillus flagellatus (strain ATCC 51484 / DSM 6875 / VKM B-1610 / KT).